A 418-amino-acid chain; its full sequence is Pyruvate decarboxylase 1 (418 aa).

H59 contributes to the substrate binding site. Residues D337 to T418 form a thiamine pyrophosphate binding region. Residues D387, N414, and G416 each coordinate Mg(2+).

This sequence belongs to the TPP enzyme family. In terms of assembly, homotetramer. A metal cation is required as a cofactor. The cofactor is thiamine diphosphate. In terms of tissue distribution, leaves.

The catalysed reaction is a 2-oxocarboxylate + H(+) = an aldehyde + CO2. The protein is Pyruvate decarboxylase 1 (PDC1) of Nicotiana tabacum (Common tobacco).